Here is a 187-residue protein sequence, read N- to C-terminus: Virulence protein ATR13 (187 aa).

The first 19 residues, 1–19 (MRLVHAVLLPGIIVFVSNG), serve as a signal peptide directing secretion. Positions 38–41 (RQLR) match the RxLR motif. A leucine heptad repeat region region spans residues 50 to 92 (LSRASFGLGKAQDPLDKFFRKIINSRKPIETSYSAKGIHEKII). Tandem repeats lie at residues 93-103 (KAYDRHVFESK), 104-114 (KAHDRHVSKSK), 115-125 (KAHGRHVSKSK), and 126-136 (MAHDRHVSKSE). Residues 93 to 136 (KAYDRHVFESKKAHDRHVSKSKKAHGRHVSKSKMAHDRHVSKSE) form a 4 X 11 AA tandem repeats region. The tract at residues 104-136 (KAHDRHVSKSKKAHGRHVSKSKMAHDRHVSKSE) is disordered. Positions 111 to 125 (SKSKKAHGRHVSKSK) are enriched in basic residues. Positions 126–136 (MAHDRHVSKSE) are enriched in basic and acidic residues. The highly variable C-terminus domain stretch occupies residues 137 to 187 (KAPIQYASVADYLKKIYPGTDIERIVSTLKRHDEVGAKDLGAKLQTAVASQ).

The protein belongs to the RxLR effector family.

It localises to the secreted. Its subcellular location is the host nucleus. It is found in the host nucleolus. The protein localises to the host cytoplasm. Secreted effector that acts as an elicitor of hypersensitive response (HR) specifically on plants carrying defense protein RPP13. Recognition of ATR13 by RPP13 initiates defense responses that are effective against oomycete, bacterial and viral pathogens. Due to high polymorphism, ATR13-Emoy2 does not recognize RPP13-Nd, the RPP13 defense protein from Arabidopsis thaliana ecotype Niederzenz. ATR13-Emoy2 is recognized by RPP13 variants RPP13-UKID44, RPP13-UKID65 and RPP13-UKID71. This is Virulence protein ATR13 from Hyaloperonospora arabidopsidis (strain Emoy2) (Downy mildew agent).